The following is a 311-amino-acid chain: Methionyl-tRNA formyltransferase (311 aa).

110–113 (SLLP) is a binding site for (6S)-5,6,7,8-tetrahydrofolate.

This sequence belongs to the Fmt family.

It carries out the reaction L-methionyl-tRNA(fMet) + (6R)-10-formyltetrahydrofolate = N-formyl-L-methionyl-tRNA(fMet) + (6S)-5,6,7,8-tetrahydrofolate + H(+). Its function is as follows. Attaches a formyl group to the free amino group of methionyl-tRNA(fMet). The formyl group appears to play a dual role in the initiator identity of N-formylmethionyl-tRNA by promoting its recognition by IF2 and preventing the misappropriation of this tRNA by the elongation apparatus. This Streptococcus thermophilus (strain ATCC BAA-250 / LMG 18311) protein is Methionyl-tRNA formyltransferase.